The following is a 509-amino-acid chain: Midnolin (509 aa).

The segment covering 1–12 (MDQHPSARSCSS) has biased composition (polar residues). Positions 1–27 (MDQHPSARSCSSRGAAPSCESVSGEPP) are disordered. Positions 28 to 102 (MNLYIHSTTG…LTLVPTVEAG (75 aa)) constitute a Ubiquitin-like domain. Disordered regions lie at residues 172 to 295 (GSSE…NTPL), 370 to 404 (QCTS…ETQP), and 448 to 485 (KRLR…EGSL). The segment covering 176–190 (GTTGLSHGASGSASG) has biased composition (low complexity). Residues 196 to 209 (HNPHPHHPHQHPHH) are compositionally biased toward basic residues. Residues 220–231 (AFPPSPSIPSIP) show a composition bias toward pro residues. Over residues 261-285 (PSSACAPSPSSPSPAASCPEASCSA) the composition is skewed to low complexity. Polar residues predominate over residues 286 to 295 (KTSGNCNTPL). A compositionally biased stretch (pro residues) spans 376 to 386 (SPAPSPPPSPP). A compositionally biased stretch (low complexity) spans 387–400 (HTTGLTGLPTTVPS).

Its subcellular location is the nucleus. It is found in the cytoplasm. It localises to the cytosol. The protein localises to the nucleolus. Its function is as follows. Facilitates ubiquitin-independent proteasomal degradation of polycomb protein CBX4. Plays a role in inhibiting the activity of glucokinase GCK and both glucose-induced and basal insulin secretion. This is Midnolin (midn) from Danio rerio (Zebrafish).